Reading from the N-terminus, the 74-residue chain is RNA-binding protein Hfq (74 aa).

In terms of domain architecture, Sm spans 9–69; the sequence is DQFLNQLRKE…ISTFVPQKNV (61 aa).

This sequence belongs to the Hfq family. Homohexamer.

Its function is as follows. RNA chaperone that binds small regulatory RNA (sRNAs) and mRNAs to facilitate mRNA translational regulation in response to envelope stress, environmental stress and changes in metabolite concentrations. Also binds with high specificity to tRNAs. The chain is RNA-binding protein Hfq from Bacillus cereus (strain Q1).